The sequence spans 275 residues: Dermonecrotic toxin LspiSicTox-betaIE4i (275 aa).

Mg(2+) is bound by residues Glu24 and Asp26. The Nucleophile role is filled by His40. Intrachain disulfides connect Cys44–Cys50 and Cys46–Cys188. Asp84 provides a ligand contact to Mg(2+).

It belongs to the arthropod phospholipase D family. Class II subfamily. The cofactor is Mg(2+). Expressed by the venom gland.

It is found in the secreted. It carries out the reaction an N-(acyl)-sphingosylphosphocholine = an N-(acyl)-sphingosyl-1,3-cyclic phosphate + choline. The enzyme catalyses an N-(acyl)-sphingosylphosphoethanolamine = an N-(acyl)-sphingosyl-1,3-cyclic phosphate + ethanolamine. The catalysed reaction is a 1-acyl-sn-glycero-3-phosphocholine = a 1-acyl-sn-glycero-2,3-cyclic phosphate + choline. It catalyses the reaction a 1-acyl-sn-glycero-3-phosphoethanolamine = a 1-acyl-sn-glycero-2,3-cyclic phosphate + ethanolamine. Dermonecrotic toxins cleave the phosphodiester linkage between the phosphate and headgroup of certain phospholipids (sphingolipid and lysolipid substrates), forming an alcohol (often choline) and a cyclic phosphate. This toxin acts on sphingomyelin (SM). It may also act on ceramide phosphoethanolamine (CPE), lysophosphatidylcholine (LPC) and lysophosphatidylethanolamine (LPE), but not on lysophosphatidylserine (LPS), and lysophosphatidylglycerol (LPG). It acts by transphosphatidylation, releasing exclusively cyclic phosphate products as second products. Induces dermonecrosis, hemolysis, increased vascular permeability, edema, inflammatory response, and platelet aggregation. The polypeptide is Dermonecrotic toxin LspiSicTox-betaIE4i (Loxosceles spinulosa (Recluse spider)).